We begin with the raw amino-acid sequence, 493 residues long: N-acetylglucosamine kinase 1 (493 aa).

In terms of domain architecture, Hexokinase spans 27–490; sequence ESSVLSSIVE…SIIGAAIGAA (464 aa). The segment at 79–221 is hexokinase small subdomain; that stretch reads TGDEHGQYLV…GLTLDVQSIL (143 aa). The interval 222–479 is hexokinase large subdomain; sequence NDSLAVYSAG…IKVDLKLIEN (258 aa).

This sequence belongs to the hexokinase family. Interacts with histone deacetylase SIR2 under filamentation-inducing conditions.

It is found in the cytoplasm. Its subcellular location is the nucleus. The protein resides in the mitochondrion. It catalyses the reaction N-acetyl-D-glucosamine + ATP = N-acetyl-D-glucosamine 6-phosphate + ADP + H(+). The enzyme catalyses D-mannose + ATP = D-mannose 6-phosphate + ADP + H(+). The catalysed reaction is D-glucose + ATP = D-glucose 6-phosphate + ADP + H(+). It carries out the reaction D-glucosamine + ATP = D-glucosamine 6-phosphate + ADP + H(+). Its pathway is carbohydrate metabolism; hexose metabolism. It functions in the pathway carbohydrate degradation; glycolysis; D-glyceraldehyde 3-phosphate and glycerone phosphate from D-glucose: step 1/4. Component of the N-acetylglucosamine catabolic cascade that phosphorylates N-acetylglucosamine (GlcNAc), and allows the unique ability to utilise GlcNAc as carbon source. Converts GlcNAc to GlcNAc-6-P. Also able to phosphorylate glucose, glucosamine (GlcN), and mannose. Galactose, fructose, N-acetylmannosamine (ManNAc), mannosamine (ManN), galactosamine (GalN), and N-acetylgalactosamine (GalNAc) are not phosphorylated by HXK1. GlcNAc metabolism is closely associated with virulence and morphogenesis, and is involved in the cell wall synthesis. Acts both as a repressor and an activator of genes involved in maintaining cellular homeostasis. Contributes to white-opaque morphological transition and plays a role as a filamentation repressor. The protein is N-acetylglucosamine kinase 1 of Candida albicans (strain SC5314 / ATCC MYA-2876) (Yeast).